The following is a 264-amino-acid chain: Glutamate racemase (264 aa).

Substrate contacts are provided by residues 10–11 and 42–43; these read DS and YG. Residue Cys73 is the Proton donor/acceptor of the active site. Position 74-75 (74-75) interacts with substrate; the sequence is NT. Cys183 functions as the Proton donor/acceptor in the catalytic mechanism. Residue 184-185 participates in substrate binding; that stretch reads TH.

Belongs to the aspartate/glutamate racemases family.

The enzyme catalyses L-glutamate = D-glutamate. It functions in the pathway cell wall biogenesis; peptidoglycan biosynthesis. Provides the (R)-glutamate required for cell wall biosynthesis. This is Glutamate racemase from Streptococcus suis (strain 98HAH33).